A 29-amino-acid polypeptide reads, in one-letter code: SGSIIHSMEANVGYSPDKSQNMVLMGGLK.

Residues 1 to 15 (SGSIIHSMEANVGYS) traverse the membrane as a helical segment.

Belongs to the complex I subunit 5 family. In terms of assembly, NDH is composed of at least 16 different subunits, 5 of which are encoded in the nucleus.

The protein localises to the plastid. Its subcellular location is the chloroplast thylakoid membrane. It catalyses the reaction a plastoquinone + NADH + (n+1) H(+)(in) = a plastoquinol + NAD(+) + n H(+)(out). It carries out the reaction a plastoquinone + NADPH + (n+1) H(+)(in) = a plastoquinol + NADP(+) + n H(+)(out). In terms of biological role, NDH shuttles electrons from NAD(P)H:plastoquinone, via FMN and iron-sulfur (Fe-S) centers, to quinones in the photosynthetic chain and possibly in a chloroplast respiratory chain. The immediate electron acceptor for the enzyme in this species is believed to be plastoquinone. Couples the redox reaction to proton translocation, and thus conserves the redox energy in a proton gradient. This Pseudotsuga menziesii (Douglas-fir) protein is NAD(P)H-quinone oxidoreductase subunit 5, chloroplastic.